The chain runs to 363 residues: Mitogen-activated protein kinase 12 (363 aa).

A Protein kinase domain is found at 25-309; that stretch reads YKDLKQVGTG…AAEALAFPFF (285 aa). ATP is bound by residues 31 to 39 and lysine 54; that span reads VGTGAYGTV. The Proton acceptor role is filled by aspartate 151. Position 181 is a phosphothreonine (threonine 181). A TXY motif is present at residues 181-183; that stretch reads TGY. A Phosphotyrosine modification is found at tyrosine 183.

This sequence belongs to the protein kinase superfamily. CMGC Ser/Thr protein kinase family. MAP kinase subfamily. Mg(2+) serves as cofactor. Post-translationally, dually phosphorylated on Thr-181 and Tyr-183, which activates the enzyme.

Its subcellular location is the cytoplasm. It carries out the reaction L-seryl-[protein] + ATP = O-phospho-L-seryl-[protein] + ADP + H(+). It catalyses the reaction L-threonyl-[protein] + ATP = O-phospho-L-threonyl-[protein] + ADP + H(+). Activated by threonine and tyrosine phosphorylation. Functionally, serine/threonine kinase which acts as an essential component of the MAP kinase signal transduction pathway. MAPK12 is one of the four p38 MAPKs which play an important role in the cascades of cellular responses evoked by extracellular stimuli such as pro-inflammatory cytokines or physical stress leading to direct activation of transcription factors. Accordingly, p38 MAPKs phosphorylate a broad range of proteins and it has been estimated that they may have approximately 200 to 300 substrates each. Some of the targets are downstream kinases such as MAPKAPK2, which are activated through phosphorylation and further phosphorylate additional targets. The polypeptide is Mitogen-activated protein kinase 12 (mapk12) (Danio rerio (Zebrafish)).